Consider the following 653-residue polypeptide: tRNA uridine 5-carboxymethylaminomethyl modification enzyme MnmG (653 aa).

Residues 18-23 (GAGHAG), Val-130, and Thr-195 contribute to the FAD site. 287–301 (GPRYCPSIEDKVVRF) serves as a coordination point for NAD(+). Gln-384 provides a ligand contact to FAD. The disordered stretch occupies residues 624 to 653 (SQTKSSASVDKRASSDNESSRPTSSASDSL). Over residues 632-642 (VDKRASSDNES) the composition is skewed to basic and acidic residues. A compositionally biased stretch (polar residues) spans 643 to 653 (SRPTSSASDSL).

Belongs to the MnmG family. Homodimer. Heterotetramer of two MnmE and two MnmG subunits. FAD is required as a cofactor.

Its subcellular location is the cytoplasm. NAD-binding protein involved in the addition of a carboxymethylaminomethyl (cmnm) group at the wobble position (U34) of certain tRNAs, forming tRNA-cmnm(5)s(2)U34. The chain is tRNA uridine 5-carboxymethylaminomethyl modification enzyme MnmG from Rhodopirellula baltica (strain DSM 10527 / NCIMB 13988 / SH1).